The sequence spans 249 residues: 3-deoxy-manno-octulosonate cytidylyltransferase (249 aa).

The protein belongs to the KdsB family.

It is found in the cytoplasm. It catalyses the reaction 3-deoxy-alpha-D-manno-oct-2-ulosonate + CTP = CMP-3-deoxy-beta-D-manno-octulosonate + diphosphate. The protein operates within nucleotide-sugar biosynthesis; CMP-3-deoxy-D-manno-octulosonate biosynthesis; CMP-3-deoxy-D-manno-octulosonate from 3-deoxy-D-manno-octulosonate and CTP: step 1/1. It functions in the pathway bacterial outer membrane biogenesis; lipopolysaccharide biosynthesis. Its function is as follows. Activates KDO (a required 8-carbon sugar) for incorporation into bacterial lipopolysaccharide in Gram-negative bacteria. The sequence is that of 3-deoxy-manno-octulosonate cytidylyltransferase from Coxiella burnetii (strain CbuG_Q212) (Coxiella burnetii (strain Q212)).